A 156-amino-acid polypeptide reads, in one-letter code: Small ribosomal subunit protein uS7c (156 aa).

It belongs to the universal ribosomal protein uS7 family. Part of the 30S ribosomal subunit.

The protein localises to the plastid. Its subcellular location is the cyanelle. In terms of biological role, one of the primary rRNA binding proteins, it binds directly to 16S rRNA where it nucleates assembly of the head domain of the 30S subunit. This chain is Small ribosomal subunit protein uS7c (rps7), found in Cyanophora paradoxa.